Consider the following 1239-residue polypeptide: Inner tegument protein (1239 aa).

4 disordered regions span residues 1–20, 669–704, 959–980, and 1087–1239; these read MASA…DAQP, GESP…GGGP, RPPP…DTPP, and GRNA…AEDE. The tract at residues 615–1239 is interaction with large tegument protein; the sequence is NELPKTRSLA…RPPRPTAEDE (625 aa). The span at 1112 to 1123 shows a compositional bias: low complexity; the sequence is DSSPFSFSSSDF. Positions 1139–1148 are enriched in gly residues; it reads VPGGGGGGEG. The span at 1151–1170 shows a compositional bias: basic and acidic residues; sequence EEERERPSDIDTAARARKVE. A compositionally biased stretch (low complexity) spans 1180 to 1189; the sequence is RTTPSPSRRA. A compositionally biased stretch (basic residues) spans 1219-1232; that stretch reads VRPRTRRGATRRPP.

This sequence belongs to the herpesviridae inner tegument protein family. As to quaternary structure, interacts (via C-terminus) with the large tegument protein/LTP (via N-terminus).

The protein resides in the virion tegument. Its subcellular location is the host cytoplasm. It is found in the host nucleus. The protein localises to the host Golgi apparatus. It localises to the host trans-Golgi network. Functionally, plays an essential role in cytoplasmic secondary envelopment during viral egress. Interacts with the capsid via the large tegument protein/LTP and participates in its transport to the host trans-Golgi network (TGN) where secondary envelopment occurs. Modulates tegumentation and capsid accumulation at the viral assembly complex. This Homo sapiens (Human) protein is Inner tegument protein.